Consider the following 401-residue polypeptide: Argininosuccinate synthase (401 aa).

Residue 8–16 (AYSGGLDTS) participates in ATP binding. Tyr-87 serves as a coordination point for L-citrulline. ATP is bound at residue Gly-117. Thr-119, Asn-123, and Asp-124 together coordinate L-aspartate. Residue Asn-123 coordinates L-citrulline. L-citrulline contacts are provided by Arg-127, Ser-175, Glu-259, and Tyr-271.

It belongs to the argininosuccinate synthase family. Type 1 subfamily. In terms of assembly, homotetramer.

It is found in the cytoplasm. It catalyses the reaction L-citrulline + L-aspartate + ATP = 2-(N(omega)-L-arginino)succinate + AMP + diphosphate + H(+). Its pathway is amino-acid biosynthesis; L-arginine biosynthesis; L-arginine from L-ornithine and carbamoyl phosphate: step 2/3. The polypeptide is Argininosuccinate synthase (Corynebacterium efficiens (strain DSM 44549 / YS-314 / AJ 12310 / JCM 11189 / NBRC 100395)).